A 144-amino-acid chain; its full sequence is Large ribosomal subunit protein uL24 (144 aa).

A disordered region spans residues 102–144; the sequence is NIVVEKPEPEPEPRKEETAEAQEAKEEAVAEEKTEVDDNDKQN. Positions 103-134 are enriched in basic and acidic residues; the sequence is IVVEKPEPEPEPRKEETAEAQEAKEEAVAEEK. A compositionally biased stretch (acidic residues) spans 135–144; it reads TEVDDNDKQN.

It belongs to the universal ribosomal protein uL24 family. Part of the 50S ribosomal subunit.

Its function is as follows. One of two assembly initiator proteins, it binds directly to the 5'-end of the 23S rRNA, where it nucleates assembly of the 50S subunit. In terms of biological role, located at the polypeptide exit tunnel on the outside of the subunit. In Thermoplasma acidophilum (strain ATCC 25905 / DSM 1728 / JCM 9062 / NBRC 15155 / AMRC-C165), this protein is Large ribosomal subunit protein uL24 (rpl24).